The following is a 1042-amino-acid chain: MGLKRAARQQRDIGKPAFDEEALVELTGKIDKTLPAVEQKIAGKRKRQNASDDGRGSKRRQTHPTEAEEHRDSHAAAKDKANRILLEEIIALGGDEKDLELVADVDSGNEGGGGPSQPKISSEQSLDQSFKDELAKFAASLGFHQFHNREDLNTEDEASPDEDAVGSTTDVSSDSDEGGGQEEMEKEDVDSFSDNEEKVTEKVDSGEAKIIPQDTKKGKQFRNLIIDPRPDWHAFPLDELPASRPDHPGKYSASIANLKSYAESLLEEDTANYQSAQAHSSTRKFMSTIMSSGTLSDKISALTLSIQESPLHNRKAFESLITLAGKKNRGQAIAALGALVDLLGNGAVLPDDRRLRPFGGQPALFGALQGSASQTWVAGQTLPGKLTKAHLVMWAYEDWLKAAYFRIIQLLEVWCSDEIEYSRSRALDFVFGLLKNKPEQEANLLRLLVNKLGDRERKIASRASYLLLQLLNVHPGMKGIVIGTVEQEVLLKPGQSLRTKYTAINTLNQTILSTREPSIADKLLRIYFDMFLALLKSGVLGNVGALNGDKRDGGTPRKKSNPSGSLTVGNEQDVAQKLVSALLTGVNRAIPFATTEDSTLEKHLDTLFRITHSSNFNTSIQALMLIQQLATSKQLAVDRFYRTLYESLLDPRLVTSSKHALYLNLIFRAMKNDADVRRVKAFVKRLIQILTLHQPSFTCGVLFLISELQKTFPDLRTLLDDPEEADDDGEEVYKDVCEDGTLDNVETQGVTSSFVSPATAYDGRKRDPEHSNAHRSCLWELTPLLSHYHPSVGIFARNLLSPQQSLPKPDLAHHTLMHFLDKFVYRNPKAEETKRGGSIMQPVLASGGTSRIVVSSKAAAKQQQSVNSASFWNLKPEQVLAEDVFFHEYFTRIGKPGKMTRKRDETKREFGSGDETGDEDEIWDALVKSKPDVEGPNVDDDSDADLGDFDYSDDEEDGSRTDGSMSDIGMDSDGFEGIFDDAGESDEQSSGEDEAPTKAKKGTATSGQKGRLSKKELKTLPTFASAEDYADILAAEDDGLDD.

6 disordered regions span residues 1–20 (MGLKRAARQQRDIGKPAFDE), 28–79 (GKID…AAKD), 101–128 (LVADVDSGNEGGGGPSQPKISSEQSLDQ), 148–214 (NRED…IPQD), 546–567 (LNGDKRDGGTPRKKSNPSGSLT), and 897–1020 (GKMT…LKTL). Basic and acidic residues-rich tracts occupy residues 9 to 18 (QQRDIGKPAF) and 63 to 79 (HPTEAEEHRDSHAAAKD). The span at 118-128 (PKISSEQSLDQ) shows a compositional bias: polar residues. Acidic residues-rich tracts occupy residues 153-164 (NTEDEASPDEDA) and 173-194 (SDSDEGGGQEEMEKEDVDSFSD). Residues 195–207 (NEEKVTEKVDSGE) show a composition bias toward basic and acidic residues. The span at 902–911 (KRDETKREFG) shows a compositional bias: basic and acidic residues. The segment covering 937–957 (NVDDDSDADLGDFDYSDDEED) has biased composition (acidic residues). The segment covering 962-972 (DGSMSDIGMDS) has biased composition (low complexity). Residues 978-994 (IFDDAGESDEQSSGEDE) show a composition bias toward acidic residues.

It belongs to the CBF/MAK21 family. In terms of assembly, interacts with NOC2. Forms a nucleolar complex with NOC2 that binds to 90S and 66S pre-ribosomes.

It is found in the nucleus. Its subcellular location is the nucleolus. Required for 60S ribosomal subunit synthesis. This chain is Ribosome biogenesis protein NOC1 (NOC1), found in Chaetomium thermophilum (strain DSM 1495 / CBS 144.50 / IMI 039719) (Thermochaetoides thermophila).